The primary structure comprises 624 residues: tRNA uridine 5-carboxymethylaminomethyl modification enzyme MnmG (624 aa).

Residues 13-18 (GGGHAG), Val125, and Ser180 contribute to the FAD site. 273 to 287 (GPRYCPSIEDKIVRF) contacts NAD(+). Gln370 lines the FAD pocket.

The protein belongs to the MnmG family. In terms of assembly, homodimer. Heterotetramer of two MnmE and two MnmG subunits. Requires FAD as cofactor.

The protein resides in the cytoplasm. Its function is as follows. NAD-binding protein involved in the addition of a carboxymethylaminomethyl (cmnm) group at the wobble position (U34) of certain tRNAs, forming tRNA-cmnm(5)s(2)U34. This Legionella pneumophila subsp. pneumophila (strain Philadelphia 1 / ATCC 33152 / DSM 7513) protein is tRNA uridine 5-carboxymethylaminomethyl modification enzyme MnmG.